Reading from the N-terminus, the 207-residue chain is MIOREX complex component 11 (207 aa).

The N-terminal 46 residues, 1 to 46 (MTVMNLFFRPCQLQMGSGPLELMLKRPTQLTTFMNTRPGGSTQIRF), are a transit peptide targeting the mitochondrion. The Mitochondrial matrix segment spans residues 47 to 98 (ISGNLDPVKRREDRLRKIFSKSRLLTRLNKNPKFSHYFDRLSEAGTVPTLTS). A helical membrane pass occupies residues 99–119 (FFILHEVTAILPLFLLWWLLY). Topologically, residues 120 to 177 (NLDLSDDFKLPNFLNGLMDSCHTAMEKFVGKRYQECLNKNKLILSGTVAYVTVKLLYP) are mitochondrial intermembrane. The helical transmembrane segment at 178-198 (VRIFISIWGAPYFGKWLLLPF) threads the bilayer. The Mitochondrial matrix segment spans residues 199–207 (QKLKHLIKK).

Belongs to the MRX11 family. In terms of assembly, associates with the mitochondrial ribosome.

Its subcellular location is the mitochondrion. The protein resides in the mitochondrion inner membrane. Component of MIOREX complexes, large expressome-like assemblies of ribosomes with factors involved in all the steps of post-transcriptional gene expression. This is MIOREX complex component 11 from Saccharomyces cerevisiae (strain ATCC 204508 / S288c) (Baker's yeast).